Here is a 512-residue protein sequence, read N- to C-terminus: GMP synthase [glutamine-hydrolyzing] (512 aa).

Residues 7 to 197 (TIIVLDFGSQ…VFGVCGCSEG (191 aa)) form the Glutamine amidotransferase type-1 domain. The active-site Nucleophile is the Cys84. Active-site residues include His171 and Glu173. The GMPS ATP-PPase domain maps to 198–387 (WNMENFIEVE…LGIPDEIVWR (190 aa)). Position 225-231 (225-231 (SGGVDSS)) interacts with ATP.

As to quaternary structure, homodimer.

The enzyme catalyses XMP + L-glutamine + ATP + H2O = GMP + L-glutamate + AMP + diphosphate + 2 H(+). The protein operates within purine metabolism; GMP biosynthesis; GMP from XMP (L-Gln route): step 1/1. Its function is as follows. Catalyzes the synthesis of GMP from XMP. This is GMP synthase [glutamine-hydrolyzing] from Bacillus mycoides (strain KBAB4) (Bacillus weihenstephanensis).